The chain runs to 973 residues: EF-hand calcium-binding domain-containing protein 13 (973 aa).

The tract at residues tyrosine 384–serine 448 is disordered. The segment covering glutamate 396 to serine 405 has biased composition (basic and acidic residues). The span at lysine 406–lysine 418 shows a compositional bias: low complexity. EF-hand domains lie at leucine 488–phenylalanine 523, proline 524–tyrosine 559, leucine 633–alanine 668, proline 756–asparagine 791, leucine 792–phenylalanine 827, and threonine 864–isoleucine 899.

The chain is EF-hand calcium-binding domain-containing protein 13 (EFCAB13) from Homo sapiens (Human).